A 244-amino-acid polypeptide reads, in one-letter code: Myrosinase MB1 (244 aa).

An N-linked (GlcNAc...) asparagine glycan is attached at N32. Y51 is a substrate binding site. The active-site Nucleophile is E125. Substrate is bound by residues W173 and 180–181 (EF). N-linked (GlcNAc...) asparagine glycosylation is present at N216.

Belongs to the glycosyl hydrolase 1 family. Homodimer. In terms of tissue distribution, in vacuoles called myrosin grains of a certain class of cells, myrosin cells, distributed in the cotyledons and the axis of the embryo as well as in different organs of the growing plant.

Its subcellular location is the vacuole. The catalysed reaction is a thioglucoside + H2O = a sugar + a thiol.. Functionally, degradation of glucosinolates (glucose residue linked by a thioglucoside bound to an amino acid derivative) to glucose, sulfate and any of the products: thiocyanates, isothiocyanates, nitriles, epithionitriles or oxazolidine-2-thiones. The protein is Myrosinase MB1 of Sinapis alba (White mustard).